The sequence spans 879 residues: Leucine--tRNA ligase (879 aa).

Residues 45 to 55 carry the 'HIGH' region motif; it reads PYPSGALHMGH. A 'KMSKS' region motif is present at residues 637–641; it reads KMSKS. K640 is a binding site for ATP.

The protein belongs to the class-I aminoacyl-tRNA synthetase family.

The protein localises to the cytoplasm. The enzyme catalyses tRNA(Leu) + L-leucine + ATP = L-leucyl-tRNA(Leu) + AMP + diphosphate. The polypeptide is Leucine--tRNA ligase (Xylella fastidiosa (strain M23)).